The chain runs to 279 residues: Probable endonuclease 4 (279 aa).

Positions 69, 109, 145, 179, 182, 216, 229, 231, and 261 each coordinate Zn(2+).

This sequence belongs to the AP endonuclease 2 family. It depends on Zn(2+) as a cofactor.

It carries out the reaction Endonucleolytic cleavage to 5'-phosphooligonucleotide end-products.. In terms of biological role, endonuclease IV plays a role in DNA repair. It cleaves phosphodiester bonds at apurinic or apyrimidinic (AP) sites, generating a 3'-hydroxyl group and a 5'-terminal sugar phosphate. This chain is Probable endonuclease 4, found in Chlorobium phaeovibrioides (strain DSM 265 / 1930) (Prosthecochloris vibrioformis (strain DSM 265)).